We begin with the raw amino-acid sequence, 205 residues long: Quinone-oxidoreductase QR2 (205 aa).

Positions 5 to 192 (VYIVYYSTYG…LKQAFHQGMY (188 aa)) constitute a Flavodoxin-like domain. FMN-binding positions include 11-15 (STYGH), 112-165 (IFFS…SPYG), and H136. Residue Y13 participates in NAD(+) binding.

The protein belongs to the WrbA family. It depends on FMN as a cofactor.

It carries out the reaction a quinone + NADH + H(+) = a quinol + NAD(+). It catalyses the reaction a quinone + NADPH + H(+) = a quinol + NADP(+). With respect to regulation, inhibited by dicumarol. In terms of biological role, NAD(P)H:quinone oxidoreductase reducing quinones by a two-electron transfer mechanism. Can use either NADPH or NADH as electron donor. Can use menadione, 5-hydroxy-1,4-naphthoquinone (juglone) and 2,6-dimethoxy-p-benzoquinone (DMBQ) as substrates. Mitigates the toxicity of exogenous quinones in the rhizosphere. This chain is Quinone-oxidoreductase QR2, found in Triphysaria versicolor (Yellow owl's clover).